We begin with the raw amino-acid sequence, 352 residues long: Phosphoribosylformylglycinamidine cyclo-ligase (352 aa).

This sequence belongs to the AIR synthase family.

The protein localises to the cytoplasm. The enzyme catalyses 2-formamido-N(1)-(5-O-phospho-beta-D-ribosyl)acetamidine + ATP = 5-amino-1-(5-phospho-beta-D-ribosyl)imidazole + ADP + phosphate + H(+). It functions in the pathway purine metabolism; IMP biosynthesis via de novo pathway; 5-amino-1-(5-phospho-D-ribosyl)imidazole from N(2)-formyl-N(1)-(5-phospho-D-ribosyl)glycinamide: step 2/2. The sequence is that of Phosphoribosylformylglycinamidine cyclo-ligase from Pseudomonas savastanoi pv. phaseolicola (strain 1448A / Race 6) (Pseudomonas syringae pv. phaseolicola (strain 1448A / Race 6)).